The following is a 92-amino-acid chain: Small ribosomal subunit protein uS19 (92 aa).

This sequence belongs to the universal ribosomal protein uS19 family.

Protein S19 forms a complex with S13 that binds strongly to the 16S ribosomal RNA. The polypeptide is Small ribosomal subunit protein uS19 (Buchnera aphidicola subsp. Baizongia pistaciae (strain Bp)).